The following is a 155-amino-acid chain: MSRRGTAEEKTAKSDPIYRNRLVNMLVNRILKHGKKSLAYQIIYRTVKKIQQKTETNPLSVLRQAIRGVTPDIAVKARRVGGSTHQVPIEIGSTQGKALAIRWLLGASRKRPGRNMAFKLSSELVDAAKGSGDAIRKKEETHRMAEANRAFAHFR.

Belongs to the universal ribosomal protein uS7 family. As to quaternary structure, part of the 30S ribosomal subunit.

The protein resides in the plastid. It localises to the chloroplast. One of the primary rRNA binding proteins, it binds directly to 16S rRNA where it nucleates assembly of the head domain of the 30S subunit. The sequence is that of Small ribosomal subunit protein uS7c (rps7) from Dioscorea bulbifera (Air potato).